Here is a 387-residue protein sequence, read N- to C-terminus: Adaptive-response sensory kinase SasA (387 aa).

Residues 1–97 (MGESLSPQAL…TDQLANQLPQ (97 aa)) are interacts with KaiC. One can recognise a Histidine kinase domain in the interval 158–382 (LVAHDLRNPL…TFHFTMPVYR (225 aa)). H161 carries the phosphohistidine; by autocatalysis modification.

As to quaternary structure, homooligomerizes. Part of the circadian clock (KaiA, KaiB, KaiC, CikA, RpaA, SasA), the composition of which varies during the circadian cycle. Binds to the CI domain of KaiC; KaiB(fs) and SasA compete for the binding site. Binds preferentially to doubly phosphorylated KaiC. Interacts with LdpA. Post-translationally, autophosphorylates in vitro.

The catalysed reaction is ATP + protein L-histidine = ADP + protein N-phospho-L-histidine.. Functionally, member of the two-component regulatory system SasA/RpaA involved in genome-wide circadian gene expression. One of three clock output pathways. Participates in the KaiABC clock protein complex, which constitutes the main circadian regulator in cyanobacteria, via its interaction with KaiC. Required for robustness of the circadian rhythm of gene expression and involved in clock output. KaiC enhances the autophosphorylation activity of SasA, which then transfers its phosphate group to RpaA to activate it. Phosphotransfer is maximal when KaiC phosphorylation is active during the circadian cycle; this two-component system is activated by fully phosphorylated KaiC. A very robust clock is reconstituted with KaiA, KaiB, KaiC, SasA, CikA and RpaA; output is measured by transcription from an appropriate reporter. In addition to its output function, recruits fold-shifted KaiB (KaiB(fs)) to KaiC to cooperatively form the KaiB(6):KaiC(6) complex (independent of SasA kinase activity); at physiological concentrations increases their association. At higher concentrations SasA and KaiB(fs) compete to bind to KaiC. Mutations that decrease cooperativity nearly phenocopy a deletion mutation. Its function is as follows. Autophosphorylation and phosphotransfer activities are not essential for clock rhythms in continuous light, but they are essential for adaptation to light/dark cycles. The polypeptide is Adaptive-response sensory kinase SasA (Synechococcus elongatus (strain ATCC 33912 / PCC 7942 / FACHB-805) (Anacystis nidulans R2)).